The following is a 156-amino-acid chain: Small ribosomal subunit protein uS7 (156 aa).

It belongs to the universal ribosomal protein uS7 family. As to quaternary structure, part of the 30S ribosomal subunit. Contacts proteins S9 and S11.

Functionally, one of the primary rRNA binding proteins, it binds directly to 16S rRNA where it nucleates assembly of the head domain of the 30S subunit. Is located at the subunit interface close to the decoding center, probably blocks exit of the E-site tRNA. The polypeptide is Small ribosomal subunit protein uS7 (Acidithiobacillus ferrooxidans (strain ATCC 53993 / BNL-5-31) (Leptospirillum ferrooxidans (ATCC 53993))).